Reading from the N-terminus, the 264-residue chain is UPF0162 protein PM0557 (264 aa).

This sequence belongs to the UPF0162 family.

The polypeptide is UPF0162 protein PM0557 (Pasteurella multocida (strain Pm70)).